The chain runs to 876 residues: Alanine--tRNA ligase (876 aa).

Zn(2+) is bound by residues H565, H569, C667, and H671.

This sequence belongs to the class-II aminoacyl-tRNA synthetase family. Zn(2+) is required as a cofactor.

It is found in the cytoplasm. It catalyses the reaction tRNA(Ala) + L-alanine + ATP = L-alanyl-tRNA(Ala) + AMP + diphosphate. Its function is as follows. Catalyzes the attachment of alanine to tRNA(Ala) in a two-step reaction: alanine is first activated by ATP to form Ala-AMP and then transferred to the acceptor end of tRNA(Ala). Also edits incorrectly charged Ser-tRNA(Ala) and Gly-tRNA(Ala) via its editing domain. The sequence is that of Alanine--tRNA ligase from Staphylococcus aureus (strain MRSA252).